A 316-amino-acid chain; its full sequence is Acetyl-coenzyme A carboxylase carboxyl transferase subunit alpha (316 aa).

Positions 36–290 (PLRTQLETLR…GSVISRHLDD (255 aa)) constitute a CoA carboxyltransferase C-terminal domain.

Belongs to the AccA family. In terms of assembly, acetyl-CoA carboxylase is a heterohexamer composed of biotin carboxyl carrier protein (AccB), biotin carboxylase (AccC) and two subunits each of ACCase subunit alpha (AccA) and ACCase subunit beta (AccD).

It localises to the cytoplasm. It catalyses the reaction N(6)-carboxybiotinyl-L-lysyl-[protein] + acetyl-CoA = N(6)-biotinyl-L-lysyl-[protein] + malonyl-CoA. Its pathway is lipid metabolism; malonyl-CoA biosynthesis; malonyl-CoA from acetyl-CoA: step 1/1. Its function is as follows. Component of the acetyl coenzyme A carboxylase (ACC) complex. First, biotin carboxylase catalyzes the carboxylation of biotin on its carrier protein (BCCP) and then the CO(2) group is transferred by the carboxyltransferase to acetyl-CoA to form malonyl-CoA. The chain is Acetyl-coenzyme A carboxylase carboxyl transferase subunit alpha from Deinococcus radiodurans (strain ATCC 13939 / DSM 20539 / JCM 16871 / CCUG 27074 / LMG 4051 / NBRC 15346 / NCIMB 9279 / VKM B-1422 / R1).